The sequence spans 747 residues: Mitochondrial inner membrane i-AAA protease supercomplex subunit YME1 (747 aa).

A compositionally biased stretch (basic and acidic residues) spans 51–64; sequence KNSGEMPPKKEADS. Residues 51–92 are disordered; that stretch reads KNSGEMPPKKEADSSGKASNKSTISSIDNSQPPPPSNTNDKT. A compositionally biased stretch (polar residues) spans 66 to 80; sequence GKASNKSTISSIDNS. 321–328 provides a ligand contact to ATP; sequence GPPGTGKT. A Zn(2+)-binding site is contributed by histidine 540. The active site involves glutamate 541. Zn(2+) is bound by residues histidine 544 and aspartate 618. The tract at residues 718-747 is disordered; sequence STNTVVEGPDSDERKDIGDDKPKIPTMLNA. The span at 728–740 shows a compositional bias: basic and acidic residues; that stretch reads SDERKDIGDDKPK.

The protein in the N-terminal section; belongs to the AAA ATPase family. In the C-terminal section; belongs to the peptidase M41 family. Component of the mitochondrial inner membrane i-AAA protease supercomplex composed of MGR1, MGR3 and YME1. Interacts directly with MGR1. The cofactor is Zn(2+).

The protein localises to the mitochondrion inner membrane. Its function is as follows. Catalytic subunit of the mitochondrial inner membrane i-AAA protease supercomplex required for mitochondrial inner membrane protein turnover. The protease is probably ATP-dependent. Important to maintain the integrity of the mitochondrial compartment. Required both for the degradation of unassembled subunit 2 of cytochrome c oxidase (COX2) and for efficient assembly of mitochondrial respiratory chain. Binds unfolded substrates in an ATPase-independent manner; binding of folded COX2, a physiological substrate, requires an active ATPase but when COX2 is destabilized an active ATPase is no longer necessary. May process ATG32. The chain is Mitochondrial inner membrane i-AAA protease supercomplex subunit YME1 (YME1) from Saccharomyces cerevisiae (strain ATCC 204508 / S288c) (Baker's yeast).